We begin with the raw amino-acid sequence, 59 residues long: Potassium channel toxin alpha-KTx 1.2 (59 aa).

Positions 1-22 (MKILSVLLLALIICSIIDWSEG) are cleaved as a signal peptide. Gln-23 is modified (pyrrolidone carboxylic acid). 3 disulfide bridges follow: Cys-29–Cys-50, Cys-35–Cys-55, and Cys-39–Cys-57. Residues 48–55 (GKCMNKKC) are interaction with Ca(2+)-activated K(+) channels.

This sequence belongs to the short scorpion toxin superfamily. Potassium channel inhibitor family. Alpha-KTx 01 subfamily. In terms of tissue distribution, expressed by the venom gland.

It localises to the secreted. Blocks calcium-activated potassium channels (Kd=43 nM on KCa1.1/KCNMA1). Has a potent presynaptic facilitatory action, with less effect on direct muscle stimulation. In Leiurus hebraeus (Hebrew deathstalker scorpion), this protein is Potassium channel toxin alpha-KTx 1.2.